The sequence spans 375 residues: 23S rRNA (uracil(747)-C(5))-methyltransferase RlmC (375 aa).

Positions 3, 11, 14, and 87 each coordinate [4Fe-4S] cluster. Residues glutamine 212, phenylalanine 241, glutamate 262, and asparagine 307 each coordinate S-adenosyl-L-methionine. The Nucleophile role is filled by cysteine 334.

This sequence belongs to the class I-like SAM-binding methyltransferase superfamily. RNA M5U methyltransferase family. RlmC subfamily.

It carries out the reaction uridine(747) in 23S rRNA + S-adenosyl-L-methionine = 5-methyluridine(747) in 23S rRNA + S-adenosyl-L-homocysteine + H(+). Catalyzes the formation of 5-methyl-uridine at position 747 (m5U747) in 23S rRNA. The protein is 23S rRNA (uracil(747)-C(5))-methyltransferase RlmC of Shigella dysenteriae serotype 1 (strain Sd197).